Here is a 465-residue protein sequence, read N- to C-terminus: Fumarate hydratase class II (465 aa).

Residues S99–T101, R127, H130–D133, S140–N142, and T188 each bind substrate. The Proton donor/acceptor role is filled by H189. Residue S319 is part of the active site. Substrate is bound by residues S320 and K325–N327.

The protein belongs to the class-II fumarase/aspartase family. Fumarase subfamily. Homotetramer.

It is found in the cytoplasm. The catalysed reaction is (S)-malate = fumarate + H2O. It functions in the pathway carbohydrate metabolism; tricarboxylic acid cycle; (S)-malate from fumarate: step 1/1. Functionally, involved in the TCA cycle. Catalyzes the stereospecific interconversion of fumarate to L-malate. This is Fumarate hydratase class II from Parasynechococcus marenigrum (strain WH8102).